The following is a 1028-amino-acid chain: Protein SMAX1-LIKE 5 (1028 aa).

The region spanning 8–199 (IQQTLTTEAA…CVEDCSVSSV (192 aa)) is the Clp R domain. 2 repeat regions span residues 12–102 (LTTE…LNRL) and 116–199 (LANA…VSSV). The short motif at 871 to 875 (LDLNI) is the EAR element.

The protein belongs to the ClpA/ClpB family. In terms of assembly, interacts probably with TPL/TPR in an EAR-motif dependent manner. As to expression, detected in roots, seedlings and axillary branches.

Its function is as follows. May function in a transcriptional corepressor complex. The sequence is that of Protein SMAX1-LIKE 5 from Arabidopsis thaliana (Mouse-ear cress).